The primary structure comprises 788 residues: Protein translocase subunit SecA 2 (788 aa).

Residues Gln86, Gly104 to Thr108, and Asp493 contribute to the ATP site.

Belongs to the SecA family. As to quaternary structure, monomer and homodimer. Part of the essential Sec protein translocation apparatus which comprises SecA, SecYEG and auxiliary proteins SecDF. Other proteins may also be involved.

The protein localises to the cell membrane. The protein resides in the cytoplasm. It catalyses the reaction ATP + H2O + cellular proteinSide 1 = ADP + phosphate + cellular proteinSide 2.. Its function is as follows. Part of the Sec protein translocase complex. Interacts with the SecYEG preprotein conducting channel. Has a central role in coupling the hydrolysis of ATP to the transfer of proteins into and across the cell membrane, serving as an ATP-driven molecular motor driving the stepwise translocation of polypeptide chains across the membrane. This Geobacillus thermodenitrificans (strain NG80-2) protein is Protein translocase subunit SecA 2.